Here is a 353-residue protein sequence, read N- to C-terminus: uncharacterized protein (353 aa).

This is an uncharacterized protein from Methanocaldococcus jannaschii (strain ATCC 43067 / DSM 2661 / JAL-1 / JCM 10045 / NBRC 100440) (Methanococcus jannaschii).